Here is a 102-residue protein sequence, read N- to C-terminus: Small ribosomal subunit protein uS10 (102 aa).

This sequence belongs to the universal ribosomal protein uS10 family. Part of the 30S ribosomal subunit.

Involved in the binding of tRNA to the ribosomes. This Nitrosopumilus maritimus (strain SCM1) protein is Small ribosomal subunit protein uS10.